We begin with the raw amino-acid sequence, 41 residues long: Peroxidase 3 (41 aa).

This sequence belongs to the peroxidase family. Classical plant (class III) peroxidase subfamily. Heme b is required as a cofactor. The cofactor is Ca(2+).

Its subcellular location is the secreted. It catalyses the reaction 2 a phenolic donor + H2O2 = 2 a phenolic radical donor + 2 H2O. In terms of biological role, removal of H(2)O(2), oxidation of toxic reductants, biosynthesis and degradation of lignin, suberization, auxin catabolism, response to environmental stresses such as wounding, pathogen attack and oxidative stress. These functions might be dependent on each isozyme/isoform in each plant tissue. The chain is Peroxidase 3 from Vitis vinifera (Grape).